Reading from the N-terminus, the 204-residue chain is Holliday junction resolvase RecU (204 aa).

Positions Met-1–Pro-24 are disordered. Over residues Asn-7 to Pro-24 the composition is skewed to polar residues. Positions 87, 89, 102, and 121 each coordinate Mg(2+).

This sequence belongs to the RecU family. Mg(2+) serves as cofactor.

The protein resides in the cytoplasm. It carries out the reaction Endonucleolytic cleavage at a junction such as a reciprocal single-stranded crossover between two homologous DNA duplexes (Holliday junction).. Endonuclease that resolves Holliday junction intermediates in genetic recombination. Cleaves mobile four-strand junctions by introducing symmetrical nicks in paired strands. Promotes annealing of linear ssDNA with homologous dsDNA. Required for DNA repair, homologous recombination and chromosome segregation. The sequence is that of Holliday junction resolvase RecU from Limosilactobacillus reuteri (strain DSM 20016) (Lactobacillus reuteri).